The primary structure comprises 604 residues: Glucoamylase 1 (604 aa).

A signal peptide spans 1-25 (MQLFNLPLKVSFFLVLSYFSLLVSA). The segment at 26–115 (ASIPSSASVQ…EFYIKYEVSG (90 aa)) is adsorption to raw starch. Residues 26-130 (ASIPSSASVQ…NNNSANYQVS (105 aa)) enclose the CBM21 domain. The segment at 116 to 604 (KTYYDNNNSA…SYAKAGAPAA (489 aa)) is starch degradation. N122 is a glycosylation site (N-linked (GlcNAc...) asparagine). Residues 127–164 (YQVSTSKPTTTTATATTTTAPSTSTTTPPSRSEPATFP) form a disordered region. Low complexity predominate over residues 130 to 162 (STSKPTTTTATATTTTAPSTSTTTPPSRSEPAT). N167, N230, and N236 each carry an N-linked (GlcNAc...) asparagine glycan. W279 is a substrate binding site. D336 (proton acceptor) is an active-site residue. E339 serves as the catalytic Proton donor. An N-linked (GlcNAc...) asparagine glycan is attached at N564.

This sequence belongs to the glycosyl hydrolase 15 family.

It carries out the reaction Hydrolysis of terminal (1-&gt;4)-linked alpha-D-glucose residues successively from non-reducing ends of the chains with release of beta-D-glucose.. The sequence is that of Glucoamylase 1 from Rhizopus oryzae (Mucormycosis agent).